Here is a 130-residue protein sequence, read N- to C-terminus: Small ribosomal subunit protein uS8 (130 aa).

Belongs to the universal ribosomal protein uS8 family. In terms of assembly, part of the 30S ribosomal subunit. Contacts proteins S5 and S12.

Functionally, one of the primary rRNA binding proteins, it binds directly to 16S rRNA central domain where it helps coordinate assembly of the platform of the 30S subunit. This is Small ribosomal subunit protein uS8 from Wigglesworthia glossinidia brevipalpis.